Reading from the N-terminus, the 526-residue chain is D-arabinono-1,4-lactone oxidase (526 aa).

An FAD-binding PCMH-type domain is found at 19-193 (YSAKPERYFQ…VSATIRVVPG (175 aa)). H56 is subject to Pros-8alpha-FAD histidine.

It belongs to the oxygen-dependent FAD-linked oxidoreductase family. In terms of assembly, monomer. It depends on FAD as a cofactor. In terms of processing, the N-terminus is blocked.

It localises to the mitochondrion membrane. It carries out the reaction D-arabinono-1,4-lactone + O2 = dehydro-D-arabinono-1,4-lactone + H2O2 + H(+). It functions in the pathway cofactor biosynthesis; D-erythroascorbate biosynthesis; dehydro-D-arabinono-1,4-lactone from D-arabinose: step 2/2. Can oxidize L-gulono-1,4-lactone as well as D-arabinono-1,4-lactone and L-galactono-1,4-lactone. The polypeptide is D-arabinono-1,4-lactone oxidase (ALO1) (Saccharomyces cerevisiae (strain ATCC 204508 / S288c) (Baker's yeast)).